Reading from the N-terminus, the 426-residue chain is Dihydroorotase (426 aa).

Zn(2+) contacts are provided by His59 and His61. Residues 61-63 and Asn93 contribute to the substrate site; that span reads HLR. Zn(2+)-binding residues include Asp151, His178, and His232. Asn279 lines the substrate pocket. Zn(2+) is bound at residue Asp306. Asp306 is an active-site residue. Substrate contacts are provided by residues His310 and 324 to 325; that span reads FG.

Belongs to the metallo-dependent hydrolases superfamily. DHOase family. Class I DHOase subfamily. Zn(2+) is required as a cofactor.

The catalysed reaction is (S)-dihydroorotate + H2O = N-carbamoyl-L-aspartate + H(+). It functions in the pathway pyrimidine metabolism; UMP biosynthesis via de novo pathway; (S)-dihydroorotate from bicarbonate: step 3/3. Its function is as follows. Catalyzes the reversible cyclization of carbamoyl aspartate to dihydroorotate. This Brevibacillus brevis (strain 47 / JCM 6285 / NBRC 100599) protein is Dihydroorotase.